The primary structure comprises 143 residues: Large ribosomal subunit protein uL15 (143 aa).

Residues 20-52 (GRGIGSGKGKTAGRGHKGQHSRAGGYHKVGFEG) form a disordered region. Residues 30 to 39 (TAGRGHKGQH) show a composition bias toward basic residues.

The protein belongs to the universal ribosomal protein uL15 family. As to quaternary structure, part of the 50S ribosomal subunit.

Functionally, binds to the 23S rRNA. This chain is Large ribosomal subunit protein uL15, found in Coxiella burnetii (strain CbuG_Q212) (Coxiella burnetii (strain Q212)).